Here is a 299-residue protein sequence, read N- to C-terminus: Large ribosomal subunit protein uL29m (299 aa).

This sequence belongs to the universal ribosomal protein uL29 family. In terms of assembly, component of the mitochondrial large ribosomal subunit. Mature mitochondrial ribosomes consist of a small (37S) and a large (54S) subunit. The 37S subunit contains at least 33 different proteins and 1 molecule of RNA (15S). The 54S subunit contains at least 45 different proteins and 1 molecule of RNA (21S).

It is found in the mitochondrion. The sequence is that of Large ribosomal subunit protein uL29m (MRPL4) from Scheffersomyces stipitis (strain ATCC 58785 / CBS 6054 / NBRC 10063 / NRRL Y-11545) (Yeast).